A 943-amino-acid chain; its full sequence is Isoleucine--tRNA ligase (943 aa).

The 'HIGH' region motif lies at 59–69 (PYANGQIHLGH). L-isoleucyl-5'-AMP is bound at residue Glu577. Residues 618–622 (KMSKS) carry the 'KMSKS' region motif. Lys621 serves as a coordination point for ATP. 4 residues coordinate Zn(2+): Cys906, Cys909, Cys926, and Cys929.

It belongs to the class-I aminoacyl-tRNA synthetase family. IleS type 1 subfamily. Monomer. Zn(2+) is required as a cofactor.

Its subcellular location is the cytoplasm. The catalysed reaction is tRNA(Ile) + L-isoleucine + ATP = L-isoleucyl-tRNA(Ile) + AMP + diphosphate. Catalyzes the attachment of isoleucine to tRNA(Ile). As IleRS can inadvertently accommodate and process structurally similar amino acids such as valine, to avoid such errors it has two additional distinct tRNA(Ile)-dependent editing activities. One activity is designated as 'pretransfer' editing and involves the hydrolysis of activated Val-AMP. The other activity is designated 'posttransfer' editing and involves deacylation of mischarged Val-tRNA(Ile). This is Isoleucine--tRNA ligase from Xanthomonas campestris pv. campestris (strain B100).